Here is a 1307-residue protein sequence, read N- to C-terminus: tRNA(adenine(34)) deaminase, chloroplastic (1307 aa).

Residues 1–55 constitute a chloroplast transit peptide; that stretch reads MFNTYTNSLQWPIRSRNQQDYCSLLPERSESYKLSKAYTSSRCYCVSSRSSCCCC. 7 disordered regions span residues 245 to 377, 439 to 458, 544 to 563, 576 to 618, 753 to 807, 837 to 957, and 975 to 1073; these read EYIG…ESTG, SSED…SSQE, HNPL…SHTS, EKRL…GQTT, GVIN…ATEG, SRAG…EEGG, and LPSR…SVSA. Residues 267 to 278 are compositionally biased toward low complexity; that stretch reads SSCSSYYSLASS. Positions 280 to 309 form a coiled coil; the sequence is EFESDTEDQEEDVEIYRENVRSSEKKVVDQ. Acidic residues predominate over residues 281 to 292; sequence FESDTEDQEEDV. Basic and acidic residues predominate over residues 293–321; it reads EIYRENVRSSEKKVVDQSAKRLKSRKEAS. A compositionally biased stretch (polar residues) spans 367 to 377; that stretch reads QTENRVSESTG. The span at 439–448 shows a compositional bias: basic and acidic residues; that stretch reads SSEDRVSEMR. Composition is skewed to polar residues over residues 546–563 and 582–591; these read PLQT…SHTS and QGSTTAVQSD. Composition is skewed to basic and acidic residues over residues 592–615 and 760–771; these read SKVE…KKDG and EEQRAESNQLKR. Residues 852–863 are compositionally biased toward polar residues; that stretch reads SSPNESVSSATW. Residues 866–883 show a composition bias toward basic and acidic residues; that stretch reads GREHDGSSDDNTKGDKVL. Polar residues-rich tracts occupy residues 895–907, 924–947, and 1045–1073; these read VGQT…SEYP, SSPS…SGNQ, and SGSS…SVSA. The CMP/dCMP-type deaminase domain occupies 1108 to 1230; sequence TVDEIFMREA…RLFPGGEGNG (123 aa). H1159 provides a ligand contact to Zn(2+). The active-site Proton donor is the E1161. C1189 and C1192 together coordinate Zn(2+). The segment at 1268–1293 is disordered; the sequence is QLRRKKKDKNSDPPTPTDHHHHHLPK.

It belongs to the cytidine and deoxycytidylate deaminase family. In terms of assembly, homodimer. It depends on Zn(2+) as a cofactor.

Its subcellular location is the plastid. It localises to the chloroplast. It carries out the reaction adenosine(34) in tRNA + H2O + H(+) = inosine(34) in tRNA + NH4(+). Deaminates adenosines to inosines in tRNA-Arg(ACG). Exclusively involved in A-to-I editing of the prokaryote-type chloroplast-tRNA and not involved in C-to-U editing. The polypeptide is tRNA(adenine(34)) deaminase, chloroplastic (TADA) (Arabidopsis thaliana (Mouse-ear cress)).